The following is a 474-amino-acid chain: Tumor necrosis factor receptor superfamily member 1B (474 aa).

The first 22 residues, 1–22 (MAPAALWVALVVELQLWATGHT), serve as a signal peptide directing secretion. The Extracellular segment spans residues 23 to 258 (VPAKVVLTPY…PIIEPSITGG (236 aa)). Residue T30 is glycosylated (O-linked (GalNAc...) threonine). 4 TNFR-Cys repeats span residues 39 to 77 (QCQISQEYYDKKAQMCCAKCPPGQYAKHFCNKTSDTVCA), 78 to 119 (DCAA…NRVC), 120 to 164 (ACNA…VICS), and 165 to 203 (ACAPGTFSDTTSSTDVCRPHRICSILAIPGNASTDAVCA). 10 disulfide bridges follow: C40/C54, C55/C68, C58/C76, C79/C94, C97/C111, C101/C119, C121/C127, C136/C145, C139/C163, and C166/C181. N-linked (GlcNAc...) asparagine glycosylation is present at N69. N110 is a glycosylation site (N-linked (GlcNAc...) asparagine). The N-linked (GlcNAc...) asparagine glycan is linked to N195. O-linked (GalNAc...) threonine glycosylation is found at T208 and T224. Residues 220–239 (QPEPTRSQPMDQEPGPSQTP) are compositionally biased toward polar residues. Positions 220-241 (QPEPTRSQPMDQEPGPSQTPHI) are disordered. Residues 259-288 (ISLPIGLIVGLTTLGLLMLGLANCFILVQR) traverse the membrane as a helical segment. Residues 289 to 474 (KKKPSCLQRE…WYDQIAVKVP (186 aa)) are Cytoplasmic-facing. Disordered stretches follow at residues 321–378 (LTTA…GSHG) and 397–464 (SQCS…NQPG). Low complexity-rich tracts occupy residues 324-338 (APSSSSSSLESSASA) and 366-378 (GSRSSDSSHGSHG). A Phosphoserine modification is found at S331. The segment covering 429–442 (ECPSQSQWETTETL) has biased composition (polar residues).

In terms of assembly, binds to TRAF2. Interacts with BMX. Interacts (activated form) with XPNPEP3.

The protein localises to the membrane. In terms of biological role, receptor with high affinity for TNFSF2/TNF-alpha and approximately 5-fold lower affinity for homotrimeric TNFSF1/lymphotoxin-alpha. The TRAF1/TRAF2 complex recruits the apoptotic suppressors BIRC2 and BIRC3 to TNFRSF1B/TNFR2. In Rattus norvegicus (Rat), this protein is Tumor necrosis factor receptor superfamily member 1B (Tnfrsf1b).